A 289-amino-acid polypeptide reads, in one-letter code: Glycine--tRNA ligase alpha subunit (289 aa).

The protein belongs to the class-II aminoacyl-tRNA synthetase family. Tetramer of two alpha and two beta subunits.

The protein resides in the cytoplasm. The enzyme catalyses tRNA(Gly) + glycine + ATP = glycyl-tRNA(Gly) + AMP + diphosphate. This Rickettsia bellii (strain OSU 85-389) protein is Glycine--tRNA ligase alpha subunit.